The following is a 92-amino-acid chain: Alpha-elapitoxin-As2a (92 aa).

An N-terminal signal peptide occupies residues 1–21 (MKTLLLTLVVVTIVCLDLGDG). Cystine bridges form between cysteine 24/cysteine 41, cysteine 34/cysteine 62, cysteine 47/cysteine 51, cysteine 66/cysteine 77, and cysteine 78/cysteine 83.

This sequence belongs to the three-finger toxin family. Long-chain subfamily. Type II alpha-neurotoxin sub-subfamily. As to expression, expressed by the venom gland.

It localises to the secreted. Functionally, binds with high affinity to muscular (alpha-1/CHRNA1) and neuronal (alpha-7/CHRNA7) nicotinic acetylcholine receptor (nAChR) and inhibits acetylcholine from binding to the receptor, thereby impairing neuromuscular and neuronal transmission. The protein is Alpha-elapitoxin-As2a of Austrelaps superbus (Lowland copperhead snake).